Reading from the N-terminus, the 77-residue chain is PTS system N-acetylglucosamine-specific EIIB component (77 aa).

A PTS EIIB type-1 domain is found at 2-77 (ASKAEKIVAG…PIAAEIEDMM (76 aa)). The active-site Phosphocysteine intermediate; for EIIB activity is the C24.

It carries out the reaction N(pros)-phospho-L-histidyl-[protein] + N-acetyl-D-glucosamine(out) = N-acetyl-D-glucosamine 6-phosphate(in) + L-histidyl-[protein]. The phosphoenolpyruvate-dependent sugar phosphotransferase system (sugar PTS), a major carbohydrate active transport system, catalyzes the phosphorylation of incoming sugar substrates concomitantly with their translocation across the cell membrane. This system is involved in N-acetylglucosamine (GlcNAc) transport. This is PTS system N-acetylglucosamine-specific EIIB component from Streptomyces coelicolor (strain ATCC BAA-471 / A3(2) / M145).